The primary structure comprises 292 residues: Large ribosomal subunit protein uL4 (292 aa).

2 stretches are compositionally biased toward basic and acidic residues: residues 1-33 (MVEVKKTTKTKSTEEKAPKITKATKEKTSDKTA) and 42-51 (KVSDKAESTP). Disordered regions lie at residues 1 to 59 (MVEV…VKTS) and 132 to 158 (GTHKVKNRAEVSGTGKKPWKQKGTGKA).

It belongs to the universal ribosomal protein uL4 family. As to quaternary structure, part of the 50S ribosomal subunit.

One of the primary rRNA binding proteins, this protein initially binds near the 5'-end of the 23S rRNA. It is important during the early stages of 50S assembly. It makes multiple contacts with different domains of the 23S rRNA in the assembled 50S subunit and ribosome. Functionally, forms part of the polypeptide exit tunnel. The chain is Large ribosomal subunit protein uL4 from Mycoplasmopsis pulmonis (strain UAB CTIP) (Mycoplasma pulmonis).